A 433-amino-acid polypeptide reads, in one-letter code: Enolase (433 aa).

Residue glutamine 164 participates in (2R)-2-phosphoglycerate binding. The active-site Proton donor is glutamate 206. Positions 243, 289, and 316 each coordinate Mg(2+). (2R)-2-phosphoglycerate contacts are provided by lysine 341, arginine 370, serine 371, and lysine 392. Lysine 341 (proton acceptor) is an active-site residue.

The protein belongs to the enolase family. Requires Mg(2+) as cofactor.

The protein localises to the cytoplasm. It localises to the secreted. The protein resides in the cell surface. The catalysed reaction is (2R)-2-phosphoglycerate = phosphoenolpyruvate + H2O. The protein operates within carbohydrate degradation; glycolysis; pyruvate from D-glyceraldehyde 3-phosphate: step 4/5. Functionally, catalyzes the reversible conversion of 2-phosphoglycerate (2-PG) into phosphoenolpyruvate (PEP). It is essential for the degradation of carbohydrates via glycolysis. This chain is Enolase, found in Borrelia hermsii (strain HS1 / DAH).